The following is a 470-amino-acid chain: AAA-ATPase At5g40000 (470 aa).

The N-terminal stretch at 1–30 (MMMMGDSFGSIGSSMASLFFLWATIQQIFP) is a signal peptide. 248–255 (GPPGTGKS) lines the ATP pocket.

The protein belongs to the AAA ATPase family. BCS1 subfamily. The cofactor is Mg(2+).

It catalyses the reaction ATP + H2O = ADP + phosphate + H(+). This chain is AAA-ATPase At5g40000, found in Arabidopsis thaliana (Mouse-ear cress).